A 587-amino-acid chain; its full sequence is Folylpolyglutamate synthase, mitochondrial (587 aa).

A mitochondrion-targeting transit peptide spans 1–42; that stretch reads MSRARSHLRAALFLAAASARGITTQVAARRGLSAWPVPQEPS. Methionine 43 bears the N-acetylmethionine mark. 106 to 109 lines the ATP pocket; sequence GKGS. 3 residues coordinate Mg(2+): serine 130, glutamate 200, and histidine 228. Residues arginine 363 and aspartate 377 each coordinate ATP. At serine 539 the chain carries Phosphoserine.

The protein belongs to the folylpolyglutamate synthase family. Monomer. The cofactor is K(+). NH4(+) serves as cofactor.

The protein resides in the mitochondrion inner membrane. The protein localises to the mitochondrion matrix. It localises to the cytoplasm. The enzyme catalyses (6S)-5,6,7,8-tetrahydrofolyl-(gamma-L-Glu)(n) + L-glutamate + ATP = (6S)-5,6,7,8-tetrahydrofolyl-(gamma-L-Glu)(n+1) + ADP + phosphate + H(+). The protein operates within cofactor biosynthesis; tetrahydrofolylpolyglutamate biosynthesis. With respect to regulation, activated by 10 mM sodium bicarbonate. Functionally, catalyzes conversion of folates to polyglutamate derivatives allowing concentration of folate compounds in the cell and the intracellular retention of these cofactors, which are important substrates for most of the folate-dependent enzymes that are involved in one-carbon transfer reactions involved in purine, pyrimidine and amino acid synthesis. Unsubstituted reduced folates are the preferred substrates. Metabolizes methotrexate (MTX) to polyglutamates. This Homo sapiens (Human) protein is Folylpolyglutamate synthase, mitochondrial (FPGS).